The primary structure comprises 228 residues: Small ribosomal subunit protein uS3 (228 aa).

Positions 39–107 (TREYLQDKLK…PVHINIEEIR (69 aa)) constitute a KH type-2 domain.

This sequence belongs to the universal ribosomal protein uS3 family. In terms of assembly, part of the 30S ribosomal subunit. Forms a tight complex with proteins S10 and S14.

Its function is as follows. Binds the lower part of the 30S subunit head. Binds mRNA in the 70S ribosome, positioning it for translation. The chain is Small ribosomal subunit protein uS3 from Pseudomonas entomophila (strain L48).